A 31-amino-acid chain; its full sequence is uncharacterized protein (31 aa).

This is an uncharacterized protein from Chlamydia phage 1 (Bacteriophage Chp1).